A 144-amino-acid chain; its full sequence is NADH dehydrogenase [ubiquinone] 1 alpha subcomplex subunit 13 (144 aa).

An N-acetylalanine modification is found at Ala2. Residues 30 to 51 form a helical membrane-spanning segment; sequence LSGYSMLAIGIGTLIYGHWSIM. The segment at 102 to 144 is important for inducing cell death; that stretch reads PDWKVGESVFHTTRWVPPLIGELYGLRTTEEALHASHGFMWYT.

Belongs to the complex I NDUFA13 subunit family. In terms of assembly, complex I is composed of 45 different subunits. Interacts with CARD15, but not with CARD4. Interacts with STAT3, but not with STAT1, STAT2 and STAT5A. Interacts with OLFM4. As to quaternary structure, (Microbial infection) Interacts with HHV-8 IRF1, in the nucleus, with HPV-16 E6 and SV40 LT. Widely expressed, with highest expression in heart, skeletal muscle, liver, kidney and placenta. In intestinal mucosa, down-regulated in areas involved in Crohn disease and ulcerative colitis.

It is found in the mitochondrion inner membrane. It localises to the nucleus. Accessory subunit of the mitochondrial membrane respiratory chain NADH dehydrogenase (Complex I), that is believed not to be involved in catalysis. Complex I functions in the transfer of electrons from NADH to the respiratory chain. The immediate electron acceptor for the enzyme is believed to be ubiquinone. Involved in the interferon/all-trans-retinoic acid (IFN/RA) induced cell death. This apoptotic activity is inhibited by interaction with viral IRF1. Prevents the transactivation of STAT3 target genes. May play a role in CARD15-mediated innate mucosal responses and serve to regulate intestinal epithelial cell responses to microbes. The sequence is that of NADH dehydrogenase [ubiquinone] 1 alpha subcomplex subunit 13 (NDUFA13) from Homo sapiens (Human).